Reading from the N-terminus, the 120-residue chain is NAD(P)H-quinone oxidoreductase subunit 3 (120 aa).

3 helical membrane-spanning segments follow: residues 10–30, 64–84, and 89–109; these read FLGFLLIAAAVPILALVTNLI, MFALVFVIFDVETVFLYPWAV, and LGLLAFIEALIFIAILVIALA.

It belongs to the complex I subunit 3 family. In terms of assembly, NDH-1 can be composed of about 15 different subunits; different subcomplexes with different compositions have been identified which probably have different functions.

It is found in the cellular thylakoid membrane. The enzyme catalyses a plastoquinone + NADH + (n+1) H(+)(in) = a plastoquinol + NAD(+) + n H(+)(out). It carries out the reaction a plastoquinone + NADPH + (n+1) H(+)(in) = a plastoquinol + NADP(+) + n H(+)(out). NDH-1 shuttles electrons from an unknown electron donor, via FMN and iron-sulfur (Fe-S) centers, to quinones in the respiratory and/or the photosynthetic chain. The immediate electron acceptor for the enzyme in this species is believed to be plastoquinone. Couples the redox reaction to proton translocation, and thus conserves the redox energy in a proton gradient. Cyanobacterial NDH-1 also plays a role in inorganic carbon-concentration. The chain is NAD(P)H-quinone oxidoreductase subunit 3 from Prochlorococcus marinus (strain MIT 9215).